Consider the following 134-residue polypeptide: Small ribosomal subunit protein uS8c (134 aa).

It belongs to the universal ribosomal protein uS8 family. In terms of assembly, part of the 30S ribosomal subunit.

It localises to the plastid. Its subcellular location is the chloroplast. In terms of biological role, one of the primary rRNA binding proteins, it binds directly to 16S rRNA central domain where it helps coordinate assembly of the platform of the 30S subunit. In Populus alba (White poplar), this protein is Small ribosomal subunit protein uS8c (rps8).